The chain runs to 238 residues: U2 small nuclear ribonucleoprotein A' (238 aa).

3 LRR repeats span residues P53–D74, D75–P95, and N97–R118. In terms of domain architecture, LRRCT spans N132–F170. Positions A167–N189 are disordered.

This sequence belongs to the U2 small nuclear ribonucleoprotein A family. Belongs to the CWC complex (or CEF1-associated complex), a spliceosome sub-complex reminiscent of a late-stage spliceosome composed of the U2, U5 and U6 snRNAs and at least BUD13, BUD31, BRR2, CDC40, CEF1, CLF1, CUS1, CWC2, CWC15, CWC21, CWC22, CWC23, CWC24, CWC25, CWC27, ECM2, HSH155, IST3, ISY1, LEA1, MSL1, NTC20, PRP8, PRP9, PRP11, PRP19, PRP21, PRP22, PRP45, PRP46, SLU7, SMB1, SMD1, SMD2, SMD3, SMX2, SMX3, SNT309, SNU114, SPP2, SYF1, SYF2, RSE1 and YJU2. Interacts with MSL1.

It is found in the nucleus. In terms of biological role, involved in pre-mRNA splicing. Associates to U2 snRNA in a MSL1 dependent manner and is required for normal accumulation of U2 snRNA. Required for the spliceosome assembly and the efficient addition of U2 snRNP onto the pre-mRNA. The sequence is that of U2 small nuclear ribonucleoprotein A' (LEA1) from Saccharomyces cerevisiae (strain ATCC 204508 / S288c) (Baker's yeast).